The primary structure comprises 129 residues: Small ribosomal subunit protein uS11 (129 aa).

Belongs to the universal ribosomal protein uS11 family. Part of the 30S ribosomal subunit. Interacts with proteins S7 and S18. Binds to IF-3.

Functionally, located on the platform of the 30S subunit, it bridges several disparate RNA helices of the 16S rRNA. Forms part of the Shine-Dalgarno cleft in the 70S ribosome. The polypeptide is Small ribosomal subunit protein uS11 (Listeria innocua serovar 6a (strain ATCC BAA-680 / CLIP 11262)).